A 227-amino-acid chain; its full sequence is Paired immunoglobulin-like type 2 receptor beta (227 aa).

The first 19 residues, 1–19 (MGRPLLLPLLLLLQPPAFL), serve as a signal peptide directing secretion. Residues 20–191 (QPGGSTGSGP…WHLSLDTAIR (172 aa)) lie on the Extracellular side of the membrane. An Ig-like V-type domain is found at 21-143 (PGGSTGSGPS…SGRQQLQSIK (123 aa)). Asn100 is a glycosylation site (N-linked (GlcNAc...) asparagine). The helical transmembrane segment at 192–212 (VALAVAVLKTVILGLLCLLLL) threads the bilayer. The Cytoplasmic segment spans residues 213–227 (WWRRRKGSRAPSSDF).

Its subcellular location is the membrane. In terms of biological role, paired receptors consist of highly related activating and inhibitory receptors and are widely involved in the regulation of the immune system. PILRB is thought to act as a cellular signaling activating receptor that associates with ITAM-bearing adapter molecules on the cell surface. In Homo sapiens (Human), this protein is Paired immunoglobulin-like type 2 receptor beta (PILRB).